The chain runs to 483 residues: MKTLNRRDFPGAQYPERIIQFGEGNFLRAFVDWQIDLLNEHTDLNSGVVVVRPIETSFPPSLSTQDGLYTTIIRGLNEKGEAVSDARLIRSVNREISVYSEYDEFLKLAHNPEMRFVFSNTTEAGISYHAGDKFDDAPAVSYPAKLTRLLFERFSHFNGAQDKGWIIIPCELIDYNGDALRELVLRYAQEWALPEAFIQWLDQANSFCSTLVDRIVTGYPRDEVAKLEEELGYHDGFLDTAEHFYLFVIQGPKSLATELRLDKYPLNVLIVDDIKPYKERKVAILNGAHTALVPVAFQAGLDTVGEAMNDAEICAFVEKAIYEEIIPVLDLPRDELESFASAVTGRFRNPYIKHQLLSIALNGMTKFRTRILPQLLAGQKSNGTLPARLTFALAALIAFYRGERNGETYPVQDDAHWLERYQQLWSQHRNRVIGTQELVAIVLAEKDHWEQDLTQVPGLVEQVANDLDAILEKGMREAVRPLC.

NAD(+) is bound at residue 18-29 (IIQFGEGNFLRA).

Belongs to the mannitol dehydrogenase family. UxaB subfamily.

The catalysed reaction is D-altronate + NAD(+) = keto-D-tagaturonate + NADH + H(+). The protein operates within carbohydrate metabolism; pentose and glucuronate interconversion. In Escherichia coli O7:K1 (strain IAI39 / ExPEC), this protein is Altronate oxidoreductase.